The primary structure comprises 249 residues: GTP cyclohydrolase 1 type 2 homolog (249 aa).

The a divalent metal cation site is built by histidine 64, histidine 65, aspartate 102, histidine 217, and glutamate 221.

This sequence belongs to the GTP cyclohydrolase I type 2/NIF3 family. In terms of assembly, homohexamer.

This Neisseria meningitidis serogroup B (strain ATCC BAA-335 / MC58) protein is GTP cyclohydrolase 1 type 2 homolog.